The chain runs to 208 residues: Negative modulator of initiation of replication (208 aa).

Positions 115-116 are interaction with DNA; it reads AV.

This sequence belongs to the SeqA family. In terms of assembly, homodimer. Polymerizes to form helical filaments.

Its subcellular location is the cytoplasm. Negative regulator of replication initiation, which contributes to regulation of DNA replication and ensures that replication initiation occurs exactly once per chromosome per cell cycle. Binds to pairs of hemimethylated GATC sequences in the oriC region, thus preventing assembly of replication proteins and re-initiation at newly replicated origins. Repression is relieved when the region becomes fully methylated. This chain is Negative modulator of initiation of replication, found in Shewanella frigidimarina (strain NCIMB 400).